We begin with the raw amino-acid sequence, 122 residues long: Putative iron-sulfur cluster insertion protein ErpA (122 aa).

Iron-sulfur cluster contacts are provided by Cys50, Cys114, and Cys116.

This sequence belongs to the HesB/IscA family. As to quaternary structure, homodimer. The cofactor is iron-sulfur cluster.

Its function is as follows. Required for insertion of 4Fe-4S clusters. This chain is Putative iron-sulfur cluster insertion protein ErpA, found in Cupriavidus metallidurans (strain ATCC 43123 / DSM 2839 / NBRC 102507 / CH34) (Ralstonia metallidurans).